The sequence spans 257 residues: Phosphomannomutase (257 aa).

Asp19 (nucleophile) is an active-site residue. Mg(2+)-binding residues include Asp19 and Asp21. The active-site Proton donor/acceptor is the Asp21. Residues Arg28, Arg133, Arg144, Arg151, Ser189, and Asp191 each contribute to the alpha-D-mannose 1-phosphate site. Residues Asp219, Phe231, Asp233, and Thr236 each coordinate Mg(2+).

This sequence belongs to the eukaryotic PMM family. As to quaternary structure, homodimer.

Its subcellular location is the cytoplasm. The enzyme catalyses alpha-D-mannose 1-phosphate = D-mannose 6-phosphate. The protein operates within nucleotide-sugar biosynthesis; GDP-alpha-D-mannose biosynthesis; alpha-D-mannose 1-phosphate from D-fructose 6-phosphate: step 2/2. Involved in the synthesis of the GDP-mannose and dolichol-phosphate-mannose required for a number of critical mannosyl transfer reactions. In Schizosaccharomyces pombe (strain 972 / ATCC 24843) (Fission yeast), this protein is Phosphomannomutase (pmm1).